A 141-amino-acid chain; its full sequence is Nucleoside diphosphate kinase (141 aa).

ATP-binding residues include K11, F59, R87, T93, R104, and N114. H117 (pros-phosphohistidine intermediate) is an active-site residue.

This sequence belongs to the NDK family. Homotetramer. Requires Mg(2+) as cofactor.

The protein resides in the cytoplasm. It catalyses the reaction a 2'-deoxyribonucleoside 5'-diphosphate + ATP = a 2'-deoxyribonucleoside 5'-triphosphate + ADP. The catalysed reaction is a ribonucleoside 5'-diphosphate + ATP = a ribonucleoside 5'-triphosphate + ADP. Functionally, major role in the synthesis of nucleoside triphosphates other than ATP. The ATP gamma phosphate is transferred to the NDP beta phosphate via a ping-pong mechanism, using a phosphorylated active-site intermediate. This Albidiferax ferrireducens (strain ATCC BAA-621 / DSM 15236 / T118) (Rhodoferax ferrireducens) protein is Nucleoside diphosphate kinase.